Here is a 514-residue protein sequence, read N- to C-terminus: Acetylcholine receptor subunit gamma (514 aa).

The first 22 residues, 1–22 (MRCSDLLLLFLLALCVLPGISC), serve as a signal peptide directing secretion. The Extracellular portion of the chain corresponds to 23-241 (RNQEEKLLQD…VIFYLIIQRK (219 aa)). Cys-150 and Cys-164 form a disulfide bridge. An N-linked (GlcNAc...) asparagine glycan is attached at Asn-163. Helical transmembrane passes span 242–266 (PLFY…VYFL), 275–293 (CTVS…FLIA), and 309–330 (YLTF…VLNV). At 331-473 (SLRTPNTHSM…WILVGRVIDR (143 aa)) the chain is on the cytoplasmic side. Phosphotyrosine; by Tyr-kinases is present on Tyr-386. Residues 474 to 494 (VCFFIMASLFVCGTIGIFLMA) traverse the membrane as a helical segment.

This sequence belongs to the ligand-gated ion channel (TC 1.A.9) family. Acetylcholine receptor (TC 1.A.9.1) subfamily. Gamma/CHRNG sub-subfamily. In terms of assembly, pentamer of two alpha chains, and one each of the beta, delta, and gamma chains.

The protein localises to the postsynaptic cell membrane. The protein resides in the cell membrane. It catalyses the reaction K(+)(in) = K(+)(out). The enzyme catalyses Na(+)(in) = Na(+)(out). In terms of biological role, after binding acetylcholine, the AChR responds by an extensive change in conformation that affects all subunits and leads to opening of an ion-conducting channel across the plasma membrane. The protein is Acetylcholine receptor subunit gamma (CHRNG) of Gallus gallus (Chicken).